We begin with the raw amino-acid sequence, 36 residues long: Defensin-like turtle egg white protein TEWP (36 aa).

The residue at position 1 (glutamine 1) is a Pyrrolidone carboxylic acid. Intrachain disulfides connect cysteine 4/cysteine 30, cysteine 8/cysteine 29, and cysteine 12/cysteine 24.

Belongs to the beta-defensin family. Monomer. As to expression, detected in egg white (at protein level).

The protein localises to the secreted. Functionally, antibacterial and antiviral peptide. Has strong inhibitory activity towards E.coli and S.typhimurium. Has significant antiviral activity against Chandipura virus. This Caretta caretta (Loggerhead sea turtle) protein is Defensin-like turtle egg white protein TEWP.